A 715-amino-acid polypeptide reads, in one-letter code: Macrolide export ATP-binding/permease protein MacB (715 aa).

The 242-residue stretch at 4 to 245 (IELQDIRKTY…VSKAAPAQSK (242 aa)) folds into the ABC transporter domain. An ATP-binding site is contributed by 40 to 47 (GTSGSGKT). The tract at residues 229–251 (AVGDMPQVSKAAPAQSKPVHSAM) is disordered. The next 4 helical transmembrane spans lie at 277–297 (AALTTLGIIIGVAAVIAMMEI), 592–612 (LLLAVALISLIVGGVGIMNIM), 639–659 (QFLFEAVLLCFLGGAVGILVG), and 681–701 (ILAAVGVSATVGIVFGYYPAW).

Belongs to the ABC transporter superfamily. Macrolide exporter (TC 3.A.1.122) family. In terms of assembly, homodimer.

Its subcellular location is the cell inner membrane. In terms of biological role, non-canonical ABC transporter that contains transmembrane domains (TMD), which form a pore in the inner membrane, and an ATP-binding domain (NBD), which is responsible for energy generation. Confers resistance against macrolides. The chain is Macrolide export ATP-binding/permease protein MacB from Syntrophobacter fumaroxidans (strain DSM 10017 / MPOB).